The following is a 251-amino-acid chain: Pyrroloquinoline-quinone synthase (251 aa).

Belongs to the PqqC family.

It catalyses the reaction 6-(2-amino-2-carboxyethyl)-7,8-dioxo-1,2,3,4,7,8-hexahydroquinoline-2,4-dicarboxylate + 3 O2 = pyrroloquinoline quinone + 2 H2O2 + 2 H2O + H(+). The protein operates within cofactor biosynthesis; pyrroloquinoline quinone biosynthesis. Its function is as follows. Ring cyclization and eight-electron oxidation of 3a-(2-amino-2-carboxyethyl)-4,5-dioxo-4,5,6,7,8,9-hexahydroquinoline-7,9-dicarboxylic-acid to PQQ. This Pseudomonas putida (strain ATCC 47054 / DSM 6125 / CFBP 8728 / NCIMB 11950 / KT2440) protein is Pyrroloquinoline-quinone synthase.